Reading from the N-terminus, the 263-residue chain is Endonuclease 8 (263 aa).

Proline 2 (schiff-base intermediate with DNA) is an active-site residue. Catalysis depends on glutamate 3, which acts as the Proton donor. The Proton donor; for beta-elimination activity role is filled by lysine 53. Residues glutamine 70, arginine 125, and asparagine 169 each coordinate DNA. Residues 229-263 (KVFHRDGELCERCGGIIEKTTLSSRPFYWCPGCQH) form an FPG-type zinc finger. The active-site Proton donor; for delta-elimination activity is the arginine 253.

It belongs to the FPG family. The cofactor is Zn(2+).

The enzyme catalyses 2'-deoxyribonucleotide-(2'-deoxyribose 5'-phosphate)-2'-deoxyribonucleotide-DNA = a 3'-end 2'-deoxyribonucleotide-(2,3-dehydro-2,3-deoxyribose 5'-phosphate)-DNA + a 5'-end 5'-phospho-2'-deoxyribonucleoside-DNA + H(+). Its function is as follows. Involved in base excision repair of DNA damaged by oxidation or by mutagenic agents. Acts as a DNA glycosylase that recognizes and removes damaged bases. Has a preference for oxidized pyrimidines, such as thymine glycol, 5,6-dihydrouracil and 5,6-dihydrothymine. Has AP (apurinic/apyrimidinic) lyase activity and introduces nicks in the DNA strand. Cleaves the DNA backbone by beta-delta elimination to generate a single-strand break at the site of the removed base with both 3'- and 5'-phosphates. This Shigella boydii serotype 4 (strain Sb227) protein is Endonuclease 8.